A 239-amino-acid polypeptide reads, in one-letter code: tRNA (guanine-N(1)-)-methyltransferase (239 aa).

S-adenosyl-L-methionine-binding positions include glycine 108 and 127 to 132 (LGDYVL).

This sequence belongs to the RNA methyltransferase TrmD family. In terms of assembly, homodimer.

The protein localises to the cytoplasm. The enzyme catalyses guanosine(37) in tRNA + S-adenosyl-L-methionine = N(1)-methylguanosine(37) in tRNA + S-adenosyl-L-homocysteine + H(+). Functionally, specifically methylates guanosine-37 in various tRNAs. The polypeptide is tRNA (guanine-N(1)-)-methyltransferase (Streptococcus pneumoniae (strain JJA)).